A 41-amino-acid polypeptide reads, in one-letter code: Large ribosomal subunit protein bL36A (41 aa).

Belongs to the bacterial ribosomal protein bL36 family.

The sequence is that of Large ribosomal subunit protein bL36A from Aeromonas salmonicida (strain A449).